A 633-amino-acid chain; its full sequence is Probable methyltransferase PMT15 (633 aa).

The Cytoplasmic portion of the chain corresponds to M1–R24. Residues V25–G45 form a helical; Signal-anchor for type II membrane protein membrane-spanning segment. The Lumenal portion of the chain corresponds to R46 to P633. 2 N-linked (GlcNAc...) asparagine glycosylation sites follow: N113 and N298.

It belongs to the methyltransferase superfamily.

It localises to the golgi apparatus membrane. The protein is Probable methyltransferase PMT15 of Arabidopsis thaliana (Mouse-ear cress).